The following is a 770-amino-acid chain: Proprotein convertase subtilisin/kexin type 7 (770 aa).

The signal sequence occupies residues 1-36; that stretch reads MPKGRQKVPHLDAHLGLPICLWLELAIFFLVPQVMG. A propeptide spanning residues 37-140 is cleaved from the precursor; that stretch reads LSEAGGLDIL…EQTLLKRAKR (104 aa). Topologically, residues 141-666 are extracellular; sequence SIHFNDPKYP…YTITPNTLKT (526 aa). Residues 152–472 enclose the Peptidase S8 domain; sequence QWHLNNRRSP…FGLLNAWRLV (321 aa). Asn166 and Asn174 each carry an N-linked (GlcNAc...) asparagine glycan. Asp186 (charge relay system) is an active-site residue. Residues 195-228 are disordered; the sequence is DIAPNYSPEGSYDLNSNDPDPMPHPDEENGNHHG. A compositionally biased stretch (basic and acidic residues) spans 215-225; that stretch reads PMPHPDEENGN. His227 functions as the Charge relay system in the catalytic mechanism. Asn240 is a glycosylation site (N-linked (GlcNAc...) asparagine). Ser405 functions as the Charge relay system in the catalytic mechanism. Positions 480-617 constitute a P/Homo B domain; the sequence is SVPYLASYVS…QLTLYGSMWS (138 aa). N-linked (GlcNAc...) asparagine glycosylation occurs at Asn510. A helical membrane pass occupies residues 667-687; sequence LVLVGCFSVFWTIYYMLEVCL. The Cytoplasmic portion of the chain corresponds to 688 to 770; that stretch reads SQRNKASTHG…LLQGKSGQIC (83 aa).

This sequence belongs to the peptidase S8 family. Ca(2+) is required as a cofactor. Widely expressed. Expressed in brain, lung, muscle, heart, liver, kidney, spleen and thymus.

Its subcellular location is the golgi apparatus. It is found in the trans-Golgi network membrane. Its activity is regulated as follows. Inhibited by zinc and copper. In terms of biological role, serine endoprotease that processes various proproteins by cleavage at paired basic amino acids, recognizing the RXXX[KR]R consensus motif. Likely functions in the constitutive secretory pathway. This chain is Proprotein convertase subtilisin/kexin type 7 (Pcsk7), found in Mus musculus (Mouse).